The primary structure comprises 715 residues: Phosphoribosylformylglycinamidine synthase subunit PurL (715 aa).

The active site involves H33. ATP is bound at residue Y36. E77 provides a ligand contact to Mg(2+). Substrate is bound by residues 78–81 (SHNH) and R100. H79 serves as the catalytic Proton acceptor. D101 is a Mg(2+) binding site. Residue Q225 participates in substrate binding. Position 253 (D253) interacts with Mg(2+). 297–299 (ESQ) serves as a coordination point for substrate. ATP contacts are provided by N475 and G512. N513 is a binding site for Mg(2+). Substrate is bound at residue S515.

Belongs to the FGAMS family. In terms of assembly, monomer. Part of the FGAM synthase complex composed of 1 PurL, 1 PurQ and 2 PurS subunits.

Its subcellular location is the cytoplasm. The enzyme catalyses N(2)-formyl-N(1)-(5-phospho-beta-D-ribosyl)glycinamide + L-glutamine + ATP + H2O = 2-formamido-N(1)-(5-O-phospho-beta-D-ribosyl)acetamidine + L-glutamate + ADP + phosphate + H(+). It functions in the pathway purine metabolism; IMP biosynthesis via de novo pathway; 5-amino-1-(5-phospho-D-ribosyl)imidazole from N(2)-formyl-N(1)-(5-phospho-D-ribosyl)glycinamide: step 1/2. Part of the phosphoribosylformylglycinamidine synthase complex involved in the purines biosynthetic pathway. Catalyzes the ATP-dependent conversion of formylglycinamide ribonucleotide (FGAR) and glutamine to yield formylglycinamidine ribonucleotide (FGAM) and glutamate. The FGAM synthase complex is composed of three subunits. PurQ produces an ammonia molecule by converting glutamine to glutamate. PurL transfers the ammonia molecule to FGAR to form FGAM in an ATP-dependent manner. PurS interacts with PurQ and PurL and is thought to assist in the transfer of the ammonia molecule from PurQ to PurL. This chain is Phosphoribosylformylglycinamidine synthase subunit PurL, found in Methanosarcina acetivorans (strain ATCC 35395 / DSM 2834 / JCM 12185 / C2A).